The following is a 964-amino-acid chain: Iron-responsive element-binding protein 2 (964 aa).

Positions 513, 579, and 582 each coordinate [4Fe-4S] cluster.

This sequence belongs to the aconitase/IPM isomerase family. In terms of assembly, interacts with RBCK1 only in iron-rich conditions. Interacts (when associated with the 4Fe-4S) with FBXL5. Interacts with CIAO1 and CIAO2A. [4Fe-4S] cluster is required as a cofactor. In terms of processing, ubiquitinated and degraded by the proteasome in presence of high level of iron and oxygen. Ubiquitinated by a SCF complex containing FBXL5. Upon iron and oxygen depletion FBXL5 is degraded, preventing ubiquitination and allowing its RNA-binding activity.

It localises to the cytoplasm. Its function is as follows. RNA-binding protein that binds to iron-responsive elements (IRES), which are stem-loop structures found in the 5'-UTR of ferritin, and delta aminolevulinic acid synthase mRNAs, and in the 3'-UTR of transferrin receptor mRNA. Binding to the IRE element in ferritin results in the repression of its mRNA translation. Binding of the protein to the transferrin receptor mRNA inhibits the degradation of this otherwise rapidly degraded mRNA. The polypeptide is Iron-responsive element-binding protein 2 (IREB2) (Sus scrofa (Pig)).